A 765-amino-acid chain; its full sequence is Probable beta-glucosidase M (765 aa).

A signal peptide spans 1 to 19; that stretch reads MHSISALLSLLGGLALSSA. N-linked (GlcNAc...) asparagine glycosylation is found at asparagine 24, asparagine 71, asparagine 93, asparagine 126, and asparagine 258. Aspartate 286 is an active-site residue. Residues asparagine 314, asparagine 321, asparagine 432, asparagine 519, asparagine 541, and asparagine 647 are each glycosylated (N-linked (GlcNAc...) asparagine).

Belongs to the glycosyl hydrolase 3 family.

The protein localises to the secreted. It catalyses the reaction Hydrolysis of terminal, non-reducing beta-D-glucosyl residues with release of beta-D-glucose.. The protein operates within glycan metabolism; cellulose degradation. Functionally, beta-glucosidases are one of a number of cellulolytic enzymes involved in the degradation of cellulosic biomass. Catalyzes the last step releasing glucose from the inhibitory cellobiose. In Aspergillus niger (strain ATCC MYA-4892 / CBS 513.88 / FGSC A1513), this protein is Probable beta-glucosidase M (bglM).